The chain runs to 316 residues: Phosphate acyltransferase (316 aa).

This sequence belongs to the PlsX family. As to quaternary structure, homodimer. Probably interacts with PlsY.

It localises to the cytoplasm. The catalysed reaction is a fatty acyl-[ACP] + phosphate = an acyl phosphate + holo-[ACP]. It functions in the pathway lipid metabolism; phospholipid metabolism. Its function is as follows. Catalyzes the reversible formation of acyl-phosphate (acyl-PO(4)) from acyl-[acyl-carrier-protein] (acyl-ACP). This enzyme utilizes acyl-ACP as fatty acyl donor, but not acyl-CoA. In Chlamydia caviae (strain ATCC VR-813 / DSM 19441 / 03DC25 / GPIC) (Chlamydophila caviae), this protein is Phosphate acyltransferase.